Reading from the N-terminus, the 766-residue chain is Lanosterol synthase ERG7 (766 aa).

Residues 1 to 47 are disordered; the sequence is MVANSTGRDASALKSRKRAADSESEPLLKQGQPFPKQPRIGSELDKT. Residues 148–190 form a PFTB 1 repeat; sequence ATAIYNYISARAHPEDGGWGLHIEGESSVFGTLMNYVALRLVG. D482 functions as the Proton donor in the catalytic mechanism. PFTB repeat units follow at residues 586–626 and 635–676; these read IRTA…KHIG and SRRG…VVQT.

The protein belongs to the terpene cyclase/mutase family.

The protein resides in the lipid droplet. It is found in the endoplasmic reticulum membrane. It catalyses the reaction (S)-2,3-epoxysqualene = lanosterol. Its pathway is terpene metabolism; lanosterol biosynthesis; lanosterol from farnesyl diphosphate: step 3/3. The protein operates within steroid metabolism; ergosterol biosynthesis. Its function is as follows. Lanosterol synthase; part of the third module of ergosterol biosynthesis pathway that includes the late steps of the pathway. ERG7 catalyzes the cyclization of (S)-2,3 oxidosqualene to lanosterol, a reaction that forms the sterol core. The third module or late pathway involves the ergosterol synthesis itself through consecutive reactions that mainly occur in the endoplasmic reticulum (ER) membrane. Firstly, the squalene synthase ERG9 catalyzes the condensation of 2 farnesyl pyrophosphate moieties to form squalene, which is the precursor of all steroids. Squalene synthase is crucial for balancing the incorporation of farnesyl diphosphate (FPP) into sterol and nonsterol isoprene synthesis. Secondly, squalene is converted into lanosterol by the consecutive action of the squalene epoxidase ERG1 and the lanosterol synthase ERG7. Then, the delta(24)-sterol C-methyltransferase ERG6 methylates lanosterol at C-24 to produce eburicol. Eburicol is the substrate of the sterol 14-alpha demethylase encoded by CYP51A, CYP51B and CYP51C, to yield 4,4,24-trimethyl ergosta-8,14,24(28)-trienol. CYP51B encodes the enzyme primarily responsible for sterol 14-alpha-demethylation, and plays an essential role in ascospore formation. CYP51A encodes an additional sterol 14-alpha-demethylase, induced on ergosterol depletion and responsible for the intrinsic variation in azole sensitivity. The third CYP51 isoform, CYP51C, does not encode a sterol 14-alpha-demethylase, but is required for full virulence on host wheat ears. The C-14 reductase ERG24 then reduces the C14=C15 double bond which leads to 4,4-dimethylfecosterol. A sequence of further demethylations at C-4, involving the C-4 demethylation complex containing the C-4 methylsterol oxidases ERG25, the sterol-4-alpha-carboxylate 3-dehydrogenase ERG26 and the 3-keto-steroid reductase ERG27, leads to the production of fecosterol via 4-methylfecosterol. ERG28 has a role as a scaffold to help anchor ERG25, ERG26 and ERG27 to the endoplasmic reticulum. The C-8 sterol isomerase ERG2 then catalyzes the reaction which results in unsaturation at C-7 in the B ring of sterols and thus converts fecosterol to episterol. The sterol-C5-desaturases ERG3A and ERG3BB then catalyze the introduction of a C-5 double bond in the B ring to produce 5-dehydroepisterol. The C-22 sterol desaturases ERG5A and ERG5B further convert 5-dehydroepisterol into ergosta-5,7,22,24(28)-tetraen-3beta-ol by forming the C-22(23) double bond in the sterol side chain. Finally, ergosta-5,7,22,24(28)-tetraen-3beta-ol is substrate of the C-24(28) sterol reductase ERG4 to produce ergosterol. This chain is Lanosterol synthase ERG7, found in Gibberella zeae (strain ATCC MYA-4620 / CBS 123657 / FGSC 9075 / NRRL 31084 / PH-1) (Wheat head blight fungus).